The following is a 185-amino-acid chain: ATP synthase subunit b 1 (185 aa).

A helical transmembrane segment spans residues 4–24; that stretch reads TLAIALTLATTSPAFAAGGGW.

The protein belongs to the ATPase B chain family. F-type ATPases have 2 components, F(1) - the catalytic core - and F(0) - the membrane proton channel. F(1) has five subunits: alpha(3), beta(3), gamma(1), delta(1), epsilon(1). F(0) has three main subunits: a(1), b(2) and c(10-14). The alpha and beta chains form an alternating ring which encloses part of the gamma chain. F(1) is attached to F(0) by a central stalk formed by the gamma and epsilon chains, while a peripheral stalk is formed by the delta and b chains.

The protein localises to the cell inner membrane. In terms of biological role, f(1)F(0) ATP synthase produces ATP from ADP in the presence of a proton or sodium gradient. F-type ATPases consist of two structural domains, F(1) containing the extramembraneous catalytic core and F(0) containing the membrane proton channel, linked together by a central stalk and a peripheral stalk. During catalysis, ATP synthesis in the catalytic domain of F(1) is coupled via a rotary mechanism of the central stalk subunits to proton translocation. Functionally, component of the F(0) channel, it forms part of the peripheral stalk, linking F(1) to F(0). In Ruegeria sp. (strain TM1040) (Silicibacter sp.), this protein is ATP synthase subunit b 1.